Here is a 338-residue protein sequence, read N- to C-terminus: MNIYYDKDCDLSLIQGMRVAIIGYGSQGHAHANNLKDSGVDVVVGLRSGSTSVAKAENAGLTVLPIEAAIKEADLAMILAPDEHQSKLYQEDIEPHLKQNATLAFAHGFNIHFRQIEPRADLDVIMVAPKGPGHLVRSTYTQGGGVPSLIAVHQDVSTKAREIALSYAAANGGGRAGIIETAFREETETDLFGEQVVLCGGVTALVQAGFETLVEAGYAPEMAYFECLHELKLIVDLMYEGGIANMRYSISNTAEYGDFTRGPRIIDDKTKTEMRRILSEIQSGEFAREFILENQAGAPTLKAKRRLGQEHLIEQVGERLRSMMPWIGKSRIVDKSKN.

Positions 1–181 (MNIYYDKDCD…GGGRAGIIET (181 aa)) constitute a KARI N-terminal Rossmann domain. NADP(+) is bound by residues 24 to 27 (YGSQ), Arg47, Ser50, Ser52, and 82 to 85 (DEHQ). His107 is an active-site residue. Gly133 is a binding site for NADP(+). One can recognise a KARI C-terminal knotted domain in the interval 182-327 (AFREETETDL…ERLRSMMPWI (146 aa)). Positions 190, 194, 226, and 230 each coordinate Mg(2+). Ser251 contributes to the substrate binding site.

It belongs to the ketol-acid reductoisomerase family. Mg(2+) serves as cofactor.

It catalyses the reaction (2R)-2,3-dihydroxy-3-methylbutanoate + NADP(+) = (2S)-2-acetolactate + NADPH + H(+). It carries out the reaction (2R,3R)-2,3-dihydroxy-3-methylpentanoate + NADP(+) = (S)-2-ethyl-2-hydroxy-3-oxobutanoate + NADPH + H(+). Its pathway is amino-acid biosynthesis; L-isoleucine biosynthesis; L-isoleucine from 2-oxobutanoate: step 2/4. It participates in amino-acid biosynthesis; L-valine biosynthesis; L-valine from pyruvate: step 2/4. Its function is as follows. Involved in the biosynthesis of branched-chain amino acids (BCAA). Catalyzes an alkyl-migration followed by a ketol-acid reduction of (S)-2-acetolactate (S2AL) to yield (R)-2,3-dihydroxy-isovalerate. In the isomerase reaction, S2AL is rearranged via a Mg-dependent methyl migration to produce 3-hydroxy-3-methyl-2-ketobutyrate (HMKB). In the reductase reaction, this 2-ketoacid undergoes a metal-dependent reduction by NADPH to yield (R)-2,3-dihydroxy-isovalerate. In Nitrosococcus oceani (strain ATCC 19707 / BCRC 17464 / JCM 30415 / NCIMB 11848 / C-107), this protein is Ketol-acid reductoisomerase (NADP(+)).